The following is a 105-amino-acid chain: Large ribosomal subunit protein bL21c (105 aa).

This sequence belongs to the bacterial ribosomal protein bL21 family. As to quaternary structure, part of the 50S ribosomal subunit.

The protein resides in the plastid. It localises to the chloroplast. Its function is as follows. This protein binds to 23S rRNA. This is Large ribosomal subunit protein bL21c from Phaeodactylum tricornutum (strain CCAP 1055/1).